We begin with the raw amino-acid sequence, 567 residues long: TGF-beta receptor type-2 (567 aa).

The first 23 residues, M1–T23, serve as a signal peptide directing secretion. Residues I24–Q166 lie on the Extracellular side of the membrane. 6 cysteine pairs are disulfide-bonded: C51/C84, C54/C71, C61/C67, C77/C101, C121/C136, and C138/C143. N70 and N94 each carry an N-linked (GlcNAc...) asparagine glycan. The helical transmembrane segment at V167–Y187 threads the bilayer. Residues C188 to K567 are Cytoplasmic-facing. The 303-residue stretch at I244 to R546 folds into the Protein kinase domain. Residues V250–V258 and K277 each bind ATP. Catalysis depends on D379, which acts as the Proton acceptor. S409, S548, and S553 each carry phosphoserine. The disordered stretch occupies residues E545–K567.

This sequence belongs to the protein kinase superfamily. TKL Ser/Thr protein kinase family. TGFB receptor subfamily. In terms of assembly, homodimer. Heterohexamer; TGFB1, TGFB2 and TGFB3 homodimeric ligands assemble a functional receptor composed of two TGFBR1 and TGFBR2 heterodimers to form a ligand-receptor heterohexamer. The respective affinity of TGFRB1 and TGFRB2 for the ligands may modulate the kinetics of assembly of the receptor and may explain the different biological activities of TGFB1, TGFB2 and TGFB3. Component of a complex composed of TSC22D1 (via N-terminus), TGFBR1 and TGFBR2; the interaction between TSC22D1 and TGFBR1 is inhibited by SMAD7 and promoted by TGFB1. Interacts with DAXX. Interacts with DYNLT4. Interacts with ZFYVE9; ZFYVE9 recruits SMAD2 and SMAD3 to the TGF-beta receptor. Interacts with and is activated by SCUBE3; this interaction does not affect TGFB1-binding to TGFBR2. Interacts with VPS39; this interaction is independent of the receptor kinase activity and of the presence of TGF-beta. Interacts with CLU. It depends on Mg(2+) as a cofactor. Mn(2+) is required as a cofactor. Post-translationally, phosphorylated on a Ser/Thr residue in the cytoplasmic domain. In terms of tissue distribution, widely expressed in adult. Expressed primarily in mesenchyme and epidermis of the midgestational fetus.

Its subcellular location is the cell membrane. The protein localises to the membrane raft. The catalysed reaction is L-threonyl-[receptor-protein] + ATP = O-phospho-L-threonyl-[receptor-protein] + ADP + H(+). It carries out the reaction L-seryl-[receptor-protein] + ATP = O-phospho-L-seryl-[receptor-protein] + ADP + H(+). In terms of biological role, transmembrane serine/threonine kinase forming with the TGF-beta type I serine/threonine kinase receptor, TGFBR1, the non-promiscuous receptor for the TGF-beta cytokines TGFB1, TGFB2 and TGFB3. Transduces the TGFB1, TGFB2 and TGFB3 signal from the cell surface to the cytoplasm and is thus regulating a plethora of physiological and pathological processes including cell cycle arrest in epithelial and hematopoietic cells, control of mesenchymal cell proliferation and differentiation, wound healing, extracellular matrix production, immunosuppression and carcinogenesis. The formation of the receptor complex composed of 2 TGFBR1 and 2 TGFBR2 molecules symmetrically bound to the cytokine dimer results in the phosphorylation and the activation of TGFRB1 by the constitutively active TGFBR2. Activated TGFBR1 phosphorylates SMAD2 which dissociates from the receptor and interacts with SMAD4. The SMAD2-SMAD4 complex is subsequently translocated to the nucleus where it modulates the transcription of the TGF-beta-regulated genes. This constitutes the canonical SMAD-dependent TGF-beta signaling cascade. Also involved in non-canonical, SMAD-independent TGF-beta signaling pathways. Has transforming growth factor beta-activated receptor activity. This Mus musculus (Mouse) protein is TGF-beta receptor type-2 (Tgfbr2).